The primary structure comprises 384 residues: 2-isopropylmalate synthase 2 (384 aa).

Residues 9–260 form the Pyruvate carboxyltransferase domain; sequence VYIVDTTLRD…DLGIDTSRFR (252 aa). Mn(2+) is bound by residues D18, H198, H200, and N234.

Belongs to the alpha-IPM synthase/homocitrate synthase family. LeuA type 1 subfamily. Homodimer. It depends on Mn(2+) as a cofactor.

Its subcellular location is the cytoplasm. It carries out the reaction 3-methyl-2-oxobutanoate + acetyl-CoA + H2O = (2S)-2-isopropylmalate + CoA + H(+). Its pathway is amino-acid biosynthesis; L-leucine biosynthesis; L-leucine from 3-methyl-2-oxobutanoate: step 1/4. Functionally, catalyzes the condensation of the acetyl group of acetyl-CoA with 3-methyl-2-oxobutanoate (2-ketoisovalerate) to form 3-carboxy-3-hydroxy-4-methylpentanoate (2-isopropylmalate). The chain is 2-isopropylmalate synthase 2 from Caldanaerobacter subterraneus subsp. tengcongensis (strain DSM 15242 / JCM 11007 / NBRC 100824 / MB4) (Thermoanaerobacter tengcongensis).